The primary structure comprises 475 residues: Kynureninase (475 aa).

Pyridoxal 5'-phosphate is bound by residues Leu-142, Thr-143, 170–173 (FPSD), Asp-255, His-258, and Tyr-280. Lys-281 is subject to N6-(pyridoxal phosphate)lysine. Pyridoxal 5'-phosphate contacts are provided by Trp-320 and Asn-348.

Belongs to the kynureninase family. Homodimer. The cofactor is pyridoxal 5'-phosphate.

It localises to the cytoplasm. It catalyses the reaction L-kynurenine + H2O = anthranilate + L-alanine + H(+). It carries out the reaction 3-hydroxy-L-kynurenine + H2O = 3-hydroxyanthranilate + L-alanine + H(+). It functions in the pathway amino-acid degradation; L-kynurenine degradation; L-alanine and anthranilate from L-kynurenine: step 1/1. The protein operates within cofactor biosynthesis; NAD(+) biosynthesis; quinolinate from L-kynurenine: step 2/3. Catalyzes the cleavage of L-kynurenine (L-Kyn) and L-3-hydroxykynurenine (L-3OHKyn) into anthranilic acid (AA) and 3-hydroxyanthranilic acid (3-OHAA), respectively. This Botryotinia fuckeliana (strain B05.10) (Noble rot fungus) protein is Kynureninase (bna5).